The chain runs to 306 residues: Recombination-associated protein RdgC (306 aa).

The protein belongs to the RdgC family.

The protein localises to the cytoplasm. The protein resides in the nucleoid. In terms of biological role, may be involved in recombination. In Pseudomonas putida (strain GB-1), this protein is Recombination-associated protein RdgC.